We begin with the raw amino-acid sequence, 346 residues long: Elongation factor Ts (346 aa).

An involved in Mg(2+) ion dislocation from EF-Tu region spans residues 80 to 83 (TDFV).

Belongs to the EF-Ts family.

The protein resides in the cytoplasm. Associates with the EF-Tu.GDP complex and induces the exchange of GDP to GTP. It remains bound to the aminoacyl-tRNA.EF-Tu.GTP complex up to the GTP hydrolysis stage on the ribosome. The protein is Elongation factor Ts of Streptococcus agalactiae serotype Ia (strain ATCC 27591 / A909 / CDC SS700).